We begin with the raw amino-acid sequence, 402 residues long: Fructose-1,6-bisphosphatase, chloroplastic (402 aa).

Residues 1–50 constitute a chloroplast transit peptide; the sequence is MAAATASTQLIFSKPCSPSRLCPFQLCVFDTKQVLSSGRRRHVGGSGVRC. Residues Glu127, Glu156, Asp177, Leu179, and Asp180 each contribute to the Mg(2+) site. 180–183 serves as a coordination point for substrate; sequence DGSS. Cys221 and Cys226 are joined by a disulfide. Substrate is bound by residues Asn285, Tyr317, Tyr335, Tyr337, and Lys347. Residue Glu353 coordinates Mg(2+).

Belongs to the FBPase class 1 family. Homotetramer. Mg(2+) is required as a cofactor.

It is found in the plastid. Its subcellular location is the chloroplast. The enzyme catalyses beta-D-fructose 1,6-bisphosphate + H2O = beta-D-fructose 6-phosphate + phosphate. Its pathway is carbohydrate biosynthesis; Calvin cycle. This Glycine max (Soybean) protein is Fructose-1,6-bisphosphatase, chloroplastic (FBP).